Reading from the N-terminus, the 121-residue chain is Large ribosomal subunit protein bL12 (121 aa).

This sequence belongs to the bacterial ribosomal protein bL12 family. As to quaternary structure, homodimer. Part of the ribosomal stalk of the 50S ribosomal subunit. Forms a multimeric L10(L12)X complex, where L10 forms an elongated spine to which 2 to 4 L12 dimers bind in a sequential fashion. Binds GTP-bound translation factors.

Functionally, forms part of the ribosomal stalk which helps the ribosome interact with GTP-bound translation factors. Is thus essential for accurate translation. The chain is Large ribosomal subunit protein bL12 from Vibrio atlanticus (strain LGP32) (Vibrio splendidus (strain Mel32)).